The chain runs to 707 residues: Elongation factor G (707 aa).

A tr-type G domain is found at E8–L294. GTP contacts are provided by residues A17 to T24, D92 to H96, and N146 to D149.

The protein belongs to the TRAFAC class translation factor GTPase superfamily. Classic translation factor GTPase family. EF-G/EF-2 subfamily.

The protein resides in the cytoplasm. In terms of biological role, catalyzes the GTP-dependent ribosomal translocation step during translation elongation. During this step, the ribosome changes from the pre-translocational (PRE) to the post-translocational (POST) state as the newly formed A-site-bound peptidyl-tRNA and P-site-bound deacylated tRNA move to the P and E sites, respectively. Catalyzes the coordinated movement of the two tRNA molecules, the mRNA and conformational changes in the ribosome. In Hyphomonas neptunium (strain ATCC 15444), this protein is Elongation factor G.